The sequence spans 261 residues: tRNA pseudouridine synthase A (261 aa).

Residue Asp-51 is the Nucleophile of the active site. Residue Tyr-109 coordinates substrate.

The protein belongs to the tRNA pseudouridine synthase TruA family. In terms of assembly, homodimer.

The catalysed reaction is uridine(38/39/40) in tRNA = pseudouridine(38/39/40) in tRNA. In terms of biological role, formation of pseudouridine at positions 38, 39 and 40 in the anticodon stem and loop of transfer RNAs. The polypeptide is tRNA pseudouridine synthase A (Shewanella baltica (strain OS185)).